The sequence spans 453 residues: Exodeoxyribonuclease 7 large subunit (453 aa).

The protein belongs to the XseA family. As to quaternary structure, heterooligomer composed of large and small subunits.

It localises to the cytoplasm. It catalyses the reaction Exonucleolytic cleavage in either 5'- to 3'- or 3'- to 5'-direction to yield nucleoside 5'-phosphates.. Its function is as follows. Bidirectionally degrades single-stranded DNA into large acid-insoluble oligonucleotides, which are then degraded further into small acid-soluble oligonucleotides. The polypeptide is Exodeoxyribonuclease 7 large subunit (Rickettsia typhi (strain ATCC VR-144 / Wilmington)).